A 403-amino-acid polypeptide reads, in one-letter code: Phosphopentomutase (403 aa).

Residues D13, D298, H303, D339, H340, and H351 each coordinate Mn(2+).

This sequence belongs to the phosphopentomutase family. Requires Mn(2+) as cofactor.

Its subcellular location is the cytoplasm. The enzyme catalyses 2-deoxy-alpha-D-ribose 1-phosphate = 2-deoxy-D-ribose 5-phosphate. The catalysed reaction is alpha-D-ribose 1-phosphate = D-ribose 5-phosphate. The protein operates within carbohydrate degradation; 2-deoxy-D-ribose 1-phosphate degradation; D-glyceraldehyde 3-phosphate and acetaldehyde from 2-deoxy-alpha-D-ribose 1-phosphate: step 1/2. Isomerase that catalyzes the conversion of deoxy-ribose 1-phosphate (dRib-1-P) and ribose 1-phosphate (Rib-1-P) to deoxy-ribose 5-phosphate (dRib-5-P) and ribose 5-phosphate (Rib-5-P), respectively. The protein is Phosphopentomutase of Streptococcus mutans serotype c (strain ATCC 700610 / UA159).